Here is a 109-residue protein sequence, read N- to C-terminus: Nucleoid-associated protein swp_1717 (109 aa).

The disordered stretch occupies residues 88-109 (QKDKMAEVTGGMQLPPGMKMPF).

This sequence belongs to the YbaB/EbfC family. In terms of assembly, homodimer.

The protein localises to the cytoplasm. It localises to the nucleoid. Binds to DNA and alters its conformation. May be involved in regulation of gene expression, nucleoid organization and DNA protection. This is Nucleoid-associated protein swp_1717 from Shewanella piezotolerans (strain WP3 / JCM 13877).